A 107-amino-acid polypeptide reads, in one-letter code: V-type proton ATPase subunit G (107 aa).

It belongs to the V-ATPase G subunit family. In terms of assembly, V-ATPase is a heteromultimeric enzyme composed of a peripheral catalytic V1 complex (components A to H) attached to an integral membrane V0 proton pore complex (components: a, c, c', c'' and d).

Functionally, catalytic subunit of the peripheral V1 complex of vacuolar ATPase (V-ATPase). V-ATPase is responsible for acidifying a variety of intracellular compartments in eukaryotic cells. This chain is V-type proton ATPase subunit G (atp6v1g), found in Dictyostelium discoideum (Social amoeba).